The following is a 258-amino-acid chain: Indole-3-glycerol phosphate synthase (258 aa).

It belongs to the TrpC family.

The enzyme catalyses 1-(2-carboxyphenylamino)-1-deoxy-D-ribulose 5-phosphate + H(+) = (1S,2R)-1-C-(indol-3-yl)glycerol 3-phosphate + CO2 + H2O. The protein operates within amino-acid biosynthesis; L-tryptophan biosynthesis; L-tryptophan from chorismate: step 4/5. The sequence is that of Indole-3-glycerol phosphate synthase from Legionella pneumophila (strain Paris).